A 73-amino-acid chain; its full sequence is YFSYNDKIIKILEAEYLNADHHFTSGTVISDKLEIACGSGILRVKKLQQESKKALSIEEFLRGTNILKDTVLK.

It belongs to the Fmt family.

It catalyses the reaction L-methionyl-tRNA(fMet) + (6R)-10-formyltetrahydrofolate = N-formyl-L-methionyl-tRNA(fMet) + (6S)-5,6,7,8-tetrahydrofolate + H(+). In terms of biological role, attaches a formyl group to the free amino group of methionyl-tRNA(fMet). The formyl group appears to play a dual role in the initiator identity of N-formylmethionyl-tRNA by promoting its recognition by IF2 and preventing the misappropriation of this tRNA by the elongation apparatus. This Rickettsia rickettsii protein is Methionyl-tRNA formyltransferase (fmt).